A 261-amino-acid chain; its full sequence is uncharacterized protein (261 aa).

Positions 1–12 (MSRTSSQNQEII) are enriched in polar residues. A disordered region spans residues 1–139 (MSRTSSQNQE…KELDTINKKT (139 aa)). Low complexity predominate over residues 23-55 (SSKPSKSSKPSKSSKPSKSSKTSKSSRSSGSKS). A compositionally biased stretch (basic and acidic residues) spans 65-74 (SRKDKYKEEY). The span at 79–108 (YPDEQEYEQEYEQEYEQEYQDNGEQTEEFV) shows a compositional bias: acidic residues. Basic and acidic residues predominate over residues 122–139 (DERQTQSNKELDTINKKT). Coiled-coil stretches lie at residues 151 to 181 (MDHDDNIKRLNAKMKAFKDAKKQEEESIIKL) and 218 to 243 (EDIIRDALMEVVRNERKVAELVKKIE).

This is an uncharacterized protein from Acanthamoeba polyphaga (Amoeba).